We begin with the raw amino-acid sequence, 161 residues long: GTP-dependent dephospho-CoA kinase (161 aa).

GTP-binding residues include Asp-40, Val-41, Val-42, Asp-59, Glu-112, and Glu-135.

Belongs to the GTP-dependent DPCK family.

The enzyme catalyses 3'-dephospho-CoA + GTP = GDP + CoA + H(+). It functions in the pathway cofactor biosynthesis; coenzyme A biosynthesis. Catalyzes the GTP-dependent phosphorylation of the 3'-hydroxyl group of dephosphocoenzyme A to form coenzyme A (CoA). This chain is GTP-dependent dephospho-CoA kinase, found in Methanocorpusculum labreanum (strain ATCC 43576 / DSM 4855 / Z).